We begin with the raw amino-acid sequence, 680 residues long: Coiled-coil domain-containing protein 138 (680 aa).

Thr-63 is modified (phosphothreonine). The residue at position 64 (Ser-64) is a Phosphoserine. Positions 260 to 339 (KEQHGTEIEH…YEFMTVQRLK (80 aa)) form a coiled coil. Positions 390–410 (EPEEPGVDGGKPPAKPSQRSD) are disordered. Phosphoserine is present on Ser-484.

The polypeptide is Coiled-coil domain-containing protein 138 (Ccdc138) (Mus musculus (Mouse)).